A 181-amino-acid polypeptide reads, in one-letter code: Ribosome maturation factor RimM (181 aa).

One can recognise a PRC barrel domain in the interval 99-172 (EDEFYQVDLI…FLIVDPMAAG (74 aa)).

Belongs to the RimM family. As to quaternary structure, binds ribosomal protein uS19.

It is found in the cytoplasm. An accessory protein needed during the final step in the assembly of 30S ribosomal subunit, possibly for assembly of the head region. Essential for efficient processing of 16S rRNA. May be needed both before and after RbfA during the maturation of 16S rRNA. It has affinity for free ribosomal 30S subunits but not for 70S ribosomes. This chain is Ribosome maturation factor RimM, found in Bartonella tribocorum (strain CIP 105476 / IBS 506).